The chain runs to 416 residues: Putative F-box/kelch-repeat protein At1g12870 (416 aa).

An F-box domain is found at 27–76 (MIASSSLPDDVVEEIFLKLPVKALMRFKSLSKQWRSTLESCYFSQRHLKI). Kelch repeat units follow at residues 199–243 (LVWL…PASA) and 297–341 (CMYE…HVLD).

The chain is Putative F-box/kelch-repeat protein At1g12870 from Arabidopsis thaliana (Mouse-ear cress).